A 545-amino-acid polypeptide reads, in one-letter code: Chaperonin GroEL 2 (545 aa).

ATP-binding positions include 30-33 (TLGP), Lys-51, 87-91 (DGTTT), Gly-415, 479-481 (NAA), and Asp-495.

It belongs to the chaperonin (HSP60) family. As to quaternary structure, forms a cylinder of 14 subunits composed of two heptameric rings stacked back-to-back. Interacts with the co-chaperonin GroES.

It localises to the cytoplasm. The catalysed reaction is ATP + H2O + a folded polypeptide = ADP + phosphate + an unfolded polypeptide.. In terms of biological role, together with its co-chaperonin GroES, plays an essential role in assisting protein folding. The GroEL-GroES system forms a nano-cage that allows encapsulation of the non-native substrate proteins and provides a physical environment optimized to promote and accelerate protein folding. This chain is Chaperonin GroEL 2, found in Escherichia coli O1:K1 / APEC.